The following is an 898-amino-acid chain: Interleukin enhancer-binding factor 3 (898 aa).

Positions 5-378 (RIFVNDDRHV…PMKRPMEEDG (374 aa)) constitute a DZF domain. The interval 52–85 (QEKGNSELSEAENMDTPPDDESKEGAGEQKAEHM) is disordered. Over residues 60-73 (SEAENMDTPPDDES) the composition is skewed to acidic residues. Thr67 carries the phosphothreonine modification. The span at 74–85 (KEGAGEQKAEHM) shows a compositional bias: basic and acidic residues. Lys100 bears the N6-acetyllysine mark. Phosphothreonine; by PKR is present on Thr188. Ser190 is subject to Phosphoserine. Lys297 participates in a covalent cross-link: Glycyl lysine isopeptide (Lys-Gly) (interchain with G-Cter in ubiquitin). Position 315 is a phosphothreonine; by PKR (Thr315). A Glycyl lysine isopeptide (Lys-Gly) (interchain with G-Cter in SUMO1) cross-link involves residue Lys348. A disordered region spans residues 363–402 (TTYAITPMKRPMEEDGEEKSPSKKKKKIQKKEEKADPPQA). Residues 371–389 (KRPMEEDGEEKSPSKKKKK) carry the Bipartite nuclear localization signal motif. The span at 372–383 (RPMEEDGEEKSP) shows a compositional bias: basic and acidic residues. Residues Ser382 and Ser384 each carry the phosphoserine modification. Lys396 participates in a covalent cross-link: Glycyl lysine isopeptide (Lys-Gly) (interchain with G-Cter in SUMO2). One can recognise a DRBM 1 domain in the interval 398–467 (DPPQAMNALM…AVKVLQDMGL (70 aa)). N6-acetyllysine is present on Lys460. Disordered stretches follow at residues 466–495 (GLPT…IVAP) and 505–524 (PSSV…LTKH). The span at 472 to 481 (EGRDSSKGED) shows a compositional bias: basic and acidic residues. 4 positions are modified to phosphoserine: Ser476, Ser477, Ser482, and Ser486. Lys489 is covalently cross-linked (Glycyl lysine isopeptide (Lys-Gly) (interchain with G-Cter in SUMO2)). Residues 524–590 (HGKNPVMELN…ALAALEKLFP (67 aa)) form the DRBM 2 domain. Thr592 carries the post-translational modification Phosphothreonine. The interval 609–898 (RGGPKFAAKP…TEHSMNYQYR (290 aa)) is interaction with PRMT1. Disordered regions lie at residues 631–661 (NEVP…GGAN) and 719–898 (QGDS…YQYR). Gly residues predominate over residues 644–661 (RGGNIRGRGRGRGFGGAN). Low complexity-rich tracts occupy residues 745-769 (SYSS…SSYG), 783-794 (GSYSSYSNSYNS), and 802-812 (DYSYDSKFNYS). Residues Ser794, Ser812, Ser814, and Ser818 each carry the phosphoserine modification. The span at 813 to 822 (GSGGRSGGNS) shows a compositional bias: gly residues. Low complexity predominate over residues 823-834 (YGSSGSSSYNTG). A compositionally biased stretch (gly residues) spans 835-845 (SHGGYGTGSGG). The segment covering 846–886 (SSSYQGKQGGYSSQSNYSSPGSSQSYSGPASSYQSSQGGYS) has biased composition (low complexity).

As to quaternary structure, identified in a IGF2BP1-dependent mRNP granule complex containing untranslated mRNAs. Interacts with FUS and SMN. Interacts (via C-terminus) with PRMT1. Forms a complex with ILF2. Can also bind to PRKDC/XRCC7: this may stabilize the interaction of PRKDC/XRCC7 and the heterodimeric complex of XRCC6/KU70 and XRCC5/KU80. Forms a heteromeric complex with ZNF346 and ILF3. Found in a nuclear export complex with XPO5, ILF3, Ran and double-stranded RNA or double-stranded minihelix VA1 RNA. Found in a nuclear export complex with XPO5, RAN, ILF3, ZNF346 and double-stranded RNA. Interacts with XPO5 and ZNF346. Forms a complex with ILF2, YLPM1, KHDRBS1, RBMX, NCOA5 and PPP1CA. Interacts with AGO1 and AGO2. Interacts with DHX36; this interaction occurs in a RNA-dependent manner. Interacts with ELAVL1; this interaction occurs in a RNA-dependent manner. Interacts with HAVCR2; this interaction promotes ILF3 ubiquitination and subsequent degradation. Post-translationally, phosphorylated at Thr-188 and Thr-315 by PKR in response to RNA viruses. This phosphorylation results in the dissociation of ILF2 from the ILF2-ILF3 complex resulting in a cytoplasmic sequestration of ILF3 where it can bind to viral RNAs and impede viral replication. Methylated by protein arginine N-methyltransferase 1. As to expression, ubiquitous. Expressed at high levels in the thymus, testis, ovary and at lower levelss in the spleen.

It is found in the nucleus. The protein localises to the nucleolus. It localises to the cytoplasm. RNA-binding protein that plays an essential role in the biogenesis of circular RNAs (circRNAs) which are produced by back-splicing circularization of pre-mRNAs. Within the nucleus, promotes circRNAs processing by stabilizing the regulatory elements residing in the flanking introns of the circularized exons. Plays thereby a role in the back-splicing of a subset of circRNAs. As a consequence, participates in a wide range of transcriptional and post-transcriptional processes. Binds to poly-U elements and AU-rich elements (AREs) in the 3'-UTR of target mRNAs. Upon viral infection, ILF3 accumulates in the cytoplasm and participates in the innate antiviral response. Mechanistically, ILF3 becomes phosphorylated and activated by the double-stranded RNA-activated protein kinase/PKR which releases ILF3 from cellular mature circRNAs. In turn, unbound ILF3 molecules are able to interact with and thus inhibit viral mRNAs. The polypeptide is Interleukin enhancer-binding factor 3 (Ilf3) (Mus musculus (Mouse)).